A 938-amino-acid chain; its full sequence is E3 ubiquitin-protein ligase CBL-B (938 aa).

The segment at proline 35 to glutamine 167 is 4H. The region spanning proline 35–glycine 343 is the Cbl-PTB domain. The segment at glycine 168–phenylalanine 240 is EF-hand-like. Aspartate 221, threonine 223, asparagine 225, tyrosine 227, and glutamate 232 together coordinate Ca(2+). The tract at residues glutamine 241 to glycine 343 is SH2-like. Residue serine 282 is modified to Phosphoserine; by PKC/PRKCQ. Position 286 (arginine 286) interacts with 4-O-phospho-L-tyrosine. A linker region spans residues leucine 344–leucine 372. At tyrosine 363 the chain carries Phosphotyrosine. An RING-type zinc finger spans residues cysteine 373–arginine 412. The segment at alanine 465–proline 588 is disordered. A compositionally biased stretch (polar residues) spans arginine 473–leucine 486. Serine 476, serine 480, serine 484, serine 521, serine 525, and serine 529 each carry phosphoserine. The interaction with VAV1 stretch occupies residues proline 543–aspartate 567. A compositionally biased stretch (pro residues) spans leucine 544–proline 566. Residue serine 633 is modified to Phosphoserine. Phosphotyrosine is present on residues tyrosine 664 and tyrosine 708. 2 disordered regions span residues glutamate 702 to cysteine 725 and aspartate 771 to leucine 885. Residues histidine 714–histidine 724 are compositionally biased toward polar residues. A compositionally biased stretch (pro residues) spans proline 775–alanine 784. The segment covering proline 794 to glycine 804 has biased composition (low complexity). The span at asparagine 839 to serine 855 shows a compositional bias: polar residues. A Phosphotyrosine modification is found at tyrosine 845. Positions glutamine 847–alanine 883 are interaction with SH3KBP1. Basic residues predominate over residues proline 862–proline 878. In terms of domain architecture, UBA spans asparagine 887 to phenylalanine 926.

Interacts with SH3 domain-containing proteins LCK, CRK and SORBS1. Interacts with LCP2 and ZAP70. Interacts with CBL. Interacts with SH3 domain-containing proteins VAV1, FYN, FGR, PLCG1, GRB2, CRKL, PIK3R1 and SH3KBP1/CIN85. Identified in heterotrimeric complexes with SH3KBP1/CIN85, CD2AP and ARHGEF7, where one CBLB peptide binds two copies of the other protein. Interacts with poly-ubiquitinated proteins. Dimerization is required for the binding of poly-ubiquitin, but not for the binding of mono-ubiquitin. Interacts with EGFR (phosphorylated). Interacts with IFT20. Post-translationally, phosphorylated on tyrosine and serine residues upon TCR or BCR activation, and upon various types of cell stimulation. In terms of processing, auto-ubiquitinated upon EGF-mediated cell activation or upon T-cell costimulation by CD28; which promotes proteasomal degradation.

It localises to the cytoplasm. It catalyses the reaction S-ubiquitinyl-[E2 ubiquitin-conjugating enzyme]-L-cysteine + [acceptor protein]-L-lysine = [E2 ubiquitin-conjugating enzyme]-L-cysteine + N(6)-ubiquitinyl-[acceptor protein]-L-lysine.. The protein operates within protein modification; protein ubiquitination. E3 ubiquitin-protein ligase which accepts ubiquitin from specific E2 ubiquitin-conjugating enzymes, and transfers it to substrates, generally promoting their degradation by the proteasome. Negatively regulates TCR (T-cell receptor), BCR (B-cell receptor) and FCER1 (high affinity immunoglobulin epsilon receptor) signal transduction pathways. In naive T-cells, inhibits VAV1 activation upon TCR engagement and imposes a requirement for CD28 costimulation for proliferation and IL-2 production. Also acts by promoting PIK3R1/p85 ubiquitination, which impairs its recruitment to the TCR and subsequent activation. In activated T-cells, inhibits PLCG1 activation and calcium mobilization upon restimulation and promotes anergy. In B-cells, acts by ubiquitinating SYK and promoting its proteasomal degradation. Slightly promotes SRC ubiquitination. May be involved in EGFR ubiquitination and internalization. May be functionally coupled with the E2 ubiquitin-protein ligase UB2D3. In association with CBL, required for proper feedback inhibition of ciliary platelet-derived growth factor receptor-alpha (PDGFRA) signaling pathway via ubiquitination and internalization of PDGFRA. This Rattus norvegicus (Rat) protein is E3 ubiquitin-protein ligase CBL-B (Cblb).